Reading from the N-terminus, the 408-residue chain is Argininosuccinate synthase (408 aa).

Residues 10 to 18 (AYSGGLDTS) and A37 each bind ATP. The L-citrulline site is built by Y90 and S95. ATP is bound at residue G120. L-aspartate contacts are provided by T122, N126, and D127. N126 provides a ligand contact to L-citrulline. L-citrulline is bound by residues R130, S181, S190, E266, and Y278.

The protein belongs to the argininosuccinate synthase family. Type 1 subfamily. As to quaternary structure, homotetramer.

The protein localises to the cytoplasm. It carries out the reaction L-citrulline + L-aspartate + ATP = 2-(N(omega)-L-arginino)succinate + AMP + diphosphate + H(+). Its pathway is amino-acid biosynthesis; L-arginine biosynthesis; L-arginine from L-ornithine and carbamoyl phosphate: step 2/3. The chain is Argininosuccinate synthase from Cereibacter sphaeroides (strain ATCC 17025 / ATH 2.4.3) (Rhodobacter sphaeroides).